The sequence spans 318 residues: Acetyl-coenzyme A carboxylase carboxyl transferase subunit alpha (318 aa).

Positions 32-293 constitute a CoA carboxyltransferase C-terminal domain; that stretch reads NLSDELERLR…KERLVSQLDR (262 aa).

It belongs to the AccA family. In terms of assembly, acetyl-CoA carboxylase is a heterohexamer composed of biotin carboxyl carrier protein (AccB), biotin carboxylase (AccC) and two subunits each of ACCase subunit alpha (AccA) and ACCase subunit beta (AccD).

It is found in the cytoplasm. The catalysed reaction is N(6)-carboxybiotinyl-L-lysyl-[protein] + acetyl-CoA = N(6)-biotinyl-L-lysyl-[protein] + malonyl-CoA. It functions in the pathway lipid metabolism; malonyl-CoA biosynthesis; malonyl-CoA from acetyl-CoA: step 1/1. In terms of biological role, component of the acetyl coenzyme A carboxylase (ACC) complex. First, biotin carboxylase catalyzes the carboxylation of biotin on its carrier protein (BCCP) and then the CO(2) group is transferred by the carboxyltransferase to acetyl-CoA to form malonyl-CoA. This chain is Acetyl-coenzyme A carboxylase carboxyl transferase subunit alpha, found in Saccharophagus degradans (strain 2-40 / ATCC 43961 / DSM 17024).